The sequence spans 425 residues: MRNFLYCTGVLLLLWMSTSSQAALNIEIFGGGTNKIPIAIAPFNGERGLPQSISAIVSADLERTGLFKLVDTLGLTSQEPEQIRYIDWQGRGASALVVGSISPLPDGRIDVRFRLLDVVKQTQLTGFSGAVTTEQLRAFAHRIADIVYETLTGEPGAFSTRIAFVRKQGSQYALQVSDYDGFNARSLIEYTEPIISPAWSPDGSRIAYTSFEKKKPVVYVQTLATRERKAVANFKGSNSAPAWSPDGSKLAVVLTLHGGSQIYLINADGSGLQRISQSPGIDTEPSFSPDGRWLMFTSDRGGSPQIYRMPVSGGVAERMTFEGDYNVSPHYSPDGKRFVYIHRNAGRFNVAIQDLSTRQMQLLTDSNFDESPSFSPNNRMILYTTEIGGRGILSTVSSDGQAKSRLSQEAGNIREAVWGPLLKQR.

The signal sequence occupies residues 1–22 (MRNFLYCTGVLLLLWMSTSSQA).

This sequence belongs to the TolB family. The Tol-Pal system is composed of five core proteins: the inner membrane proteins TolA, TolQ and TolR, the periplasmic protein TolB and the outer membrane protein Pal. They form a network linking the inner and outer membranes and the peptidoglycan layer.

It localises to the periplasm. Its function is as follows. Part of the Tol-Pal system, which plays a role in outer membrane invagination during cell division and is important for maintaining outer membrane integrity. This Nitrosomonas europaea (strain ATCC 19718 / CIP 103999 / KCTC 2705 / NBRC 14298) protein is Tol-Pal system protein TolB.